The sequence spans 469 residues: Abscisic acid 8'-hydroxylase CYP707A2 (469 aa).

The chain crosses the membrane as a helical span at residues 3–23 (FVSMLCLFTFISLTLLLIHSI). C414 is a binding site for heme.

The protein belongs to the cytochrome P450 family. Requires heme as cofactor. In terms of tissue distribution, expressed at low levels in fruit.

It localises to the membrane. The catalysed reaction is 2-cis-(+)-abscisate + reduced [NADPH--hemoprotein reductase] + O2 = (+)-8'-hydroxyabscisate + oxidized [NADPH--hemoprotein reductase] + H2O + H(+). The protein operates within plant hormone degradation; abscisic acid degradation. Negative regulator of fruit ripening involved in the oxidative degradation of abscisic acid (ABA). The sequence is that of Abscisic acid 8'-hydroxylase CYP707A2 from Solanum lycopersicum (Tomato).